The sequence spans 285 residues: Ribosomal RNA small subunit methyltransferase I (285 aa).

The protein belongs to the methyltransferase superfamily. RsmI family.

The protein resides in the cytoplasm. The enzyme catalyses cytidine(1402) in 16S rRNA + S-adenosyl-L-methionine = 2'-O-methylcytidine(1402) in 16S rRNA + S-adenosyl-L-homocysteine + H(+). In terms of biological role, catalyzes the 2'-O-methylation of the ribose of cytidine 1402 (C1402) in 16S rRNA. The polypeptide is Ribosomal RNA small subunit methyltransferase I (Mycobacterium tuberculosis (strain ATCC 25618 / H37Rv)).